A 631-amino-acid chain; its full sequence is Phosphomethylpyrimidine synthase (631 aa).

Residues asparagine 239, methionine 268, tyrosine 297, histidine 333, 353 to 355 (SRG), 394 to 397 (DGLR), and glutamate 433 each bind substrate. Histidine 437 serves as a coordination point for Zn(2+). Residue tyrosine 460 coordinates substrate. Residue histidine 501 participates in Zn(2+) binding. 3 residues coordinate [4Fe-4S] cluster: cysteine 581, cysteine 584, and cysteine 589.

This sequence belongs to the ThiC family. Homodimer. [4Fe-4S] cluster is required as a cofactor.

It catalyses the reaction 5-amino-1-(5-phospho-beta-D-ribosyl)imidazole + S-adenosyl-L-methionine = 4-amino-2-methyl-5-(phosphooxymethyl)pyrimidine + CO + 5'-deoxyadenosine + formate + L-methionine + 3 H(+). It participates in cofactor biosynthesis; thiamine diphosphate biosynthesis. Functionally, catalyzes the synthesis of the hydroxymethylpyrimidine phosphate (HMP-P) moiety of thiamine from aminoimidazole ribotide (AIR) in a radical S-adenosyl-L-methionine (SAM)-dependent reaction. This is Phosphomethylpyrimidine synthase from Salmonella schwarzengrund (strain CVM19633).